A 951-amino-acid chain; its full sequence is Exportin-2 (951 aa).

The region spanning Ala-29–Ser-104 is the Importin N-terminal domain.

It belongs to the XPO2/CSE1 family.

It is found in the cytoplasm. The protein localises to the nucleus. Functionally, export receptor for importin alpha. Mediates importin-alpha re-export from the nucleus to the cytoplasm after import substrates have been released into the nucleoplasm. This Dictyostelium discoideum (Social amoeba) protein is Exportin-2 (xpo2).